Consider the following 478-residue polypeptide: UDP-N-acetylmuramate--L-alanine ligase (478 aa).

120–126 (GSHGKTT) is an ATP binding site.

Belongs to the MurCDEF family.

The protein resides in the cytoplasm. The enzyme catalyses UDP-N-acetyl-alpha-D-muramate + L-alanine + ATP = UDP-N-acetyl-alpha-D-muramoyl-L-alanine + ADP + phosphate + H(+). Its pathway is cell wall biogenesis; peptidoglycan biosynthesis. Its function is as follows. Cell wall formation. The sequence is that of UDP-N-acetylmuramate--L-alanine ligase from Rickettsia felis (strain ATCC VR-1525 / URRWXCal2) (Rickettsia azadi).